We begin with the raw amino-acid sequence, 891 residues long: Alanine--tRNA ligase (891 aa).

Zn(2+)-binding residues include histidine 564, histidine 568, cysteine 681, and histidine 685.

The protein belongs to the class-II aminoacyl-tRNA synthetase family. Zn(2+) serves as cofactor.

The protein resides in the cytoplasm. The enzyme catalyses tRNA(Ala) + L-alanine + ATP = L-alanyl-tRNA(Ala) + AMP + diphosphate. Its function is as follows. Catalyzes the attachment of alanine to tRNA(Ala) in a two-step reaction: alanine is first activated by ATP to form Ala-AMP and then transferred to the acceptor end of tRNA(Ala). Also edits incorrectly charged Ser-tRNA(Ala) and Gly-tRNA(Ala) via its editing domain. This is Alanine--tRNA ligase from Methylorubrum populi (strain ATCC BAA-705 / NCIMB 13946 / BJ001) (Methylobacterium populi).